The sequence spans 302 residues: Sulfate adenylyltransferase subunit 2 (302 aa).

Belongs to the PAPS reductase family. CysD subfamily. As to quaternary structure, heterodimer composed of CysD, the smaller subunit, and CysN.

The enzyme catalyses sulfate + ATP + H(+) = adenosine 5'-phosphosulfate + diphosphate. It participates in sulfur metabolism; hydrogen sulfide biosynthesis; sulfite from sulfate: step 1/3. In terms of biological role, with CysN forms the ATP sulfurylase (ATPS) that catalyzes the adenylation of sulfate producing adenosine 5'-phosphosulfate (APS) and diphosphate, the first enzymatic step in sulfur assimilation pathway. APS synthesis involves the formation of a high-energy phosphoric-sulfuric acid anhydride bond driven by GTP hydrolysis by CysN coupled to ATP hydrolysis by CysD. This chain is Sulfate adenylyltransferase subunit 2, found in Yersinia enterocolitica serotype O:8 / biotype 1B (strain NCTC 13174 / 8081).